The following is a 72-amino-acid chain: UPF0154 protein lhv_1362 (72 aa).

Residues 3-23 (LGLAIFLIIIALLVGAVAGFY) form a helical membrane-spanning segment.

The protein belongs to the UPF0154 family.

It is found in the cell membrane. The protein is UPF0154 protein lhv_1362 of Lactobacillus helveticus (strain DPC 4571).